Reading from the N-terminus, the 474-residue chain is MTFQLSPELAAVVDSGLLSPVRAGTPVEAAVSDAAWLAAMVEAETALVRAQARLGTVPESAAAAIVEAARPERLDLVALARASRETANPVVGFVKALTAVVAAEDPAAAEYVHRGSTSQDILDTATMLVVRRAGVLIRADLDRCAAALERLARTHRATPMAGRTLTLHAVPTTFGLKAAGWLHLVTEARRRTAALAAALPVELGGAAGTLAGYLEHANNPGDDYADRLVEAYAHETGLAPATLPWHVLRTPIADTGAVCAFLAAALGKIAVDVQSLARTEVGEVTEPAVAGRGASSAMPHKRNPVLATLIRSAALQVPQHAAVLYGAMLAEDERSGGAWHAEWQPLRECLRLAGGAAHTAVELLTGLTVDADRMRANLDLTGGQIVSERVAAVLTPLLGKAQARALLTRASHEAADRGTSLAEVLSAAPEVTRHLTAAELEELLDPTRYLGAAPGLVDRAVGGPDRAVPHRSAA.

The Proton acceptor role is filled by Ser-295. Fumarate is bound by residues Lys-301 and Asn-303. The Proton donor role is filled by Arg-334.

It belongs to the class-II fumarase/aspartase family.

It catalyses the reaction 2-nitrobutanedioate = fumarate + nitrite + H(+). Functionally, involved in the biosynthesis of desferrioxamine derivatives which have iron-binding properties and may act as siderophores. Catalyzes the formation of nitrous acid from nitrosuccinic acid (2-nitrobutanedioate) by elimination of its nitro group. This chain is Nitrosuccinate lyase, found in Streptomyces davaonensis (strain DSM 101723 / JCM 4913 / KCC S-0913 / 768).